Reading from the N-terminus, the 162-residue chain is Small ribosomal subunit protein uS13 (162 aa).

Positions 142-162 are disordered; the sequence is RGQRTKSTGRRGSTVGVSRKK.

It belongs to the universal ribosomal protein uS13 family. In terms of assembly, part of the 30S ribosomal subunit. Forms a loose heterodimer with protein S19. Forms two bridges to the 50S subunit in the 70S ribosome.

Functionally, located at the top of the head of the 30S subunit, it contacts several helices of the 16S rRNA. In the 70S ribosome it contacts the 23S rRNA (bridge B1a) and protein L5 of the 50S subunit (bridge B1b), connecting the 2 subunits; these bridges are implicated in subunit movement. In Methanosarcina mazei (strain ATCC BAA-159 / DSM 3647 / Goe1 / Go1 / JCM 11833 / OCM 88) (Methanosarcina frisia), this protein is Small ribosomal subunit protein uS13.